Here is a 326-residue protein sequence, read N- to C-terminus: Vitamin B12 import system permease protein BtuC (326 aa).

The next 9 membrane-spanning stretches (helical) occupy residues Leu17–Ala39, Arg59–Phe81, Pro88–Leu107, Gln111–Leu133, Leu146–Thr168, Trp188–Cys205, Met242–Leu264, Val274–Leu296, and Leu303–Leu322.

This sequence belongs to the binding-protein-dependent transport system permease family. FecCD subfamily. The complex is composed of two ATP-binding proteins (BtuD), two transmembrane proteins (BtuC) and a solute-binding protein (BtuF).

Its subcellular location is the cell inner membrane. Part of the ABC transporter complex BtuCDF involved in vitamin B12 import. Involved in the translocation of the substrate across the membrane. In Salmonella paratyphi A (strain ATCC 9150 / SARB42), this protein is Vitamin B12 import system permease protein BtuC.